A 290-amino-acid polypeptide reads, in one-letter code: Diaminopimelate epimerase (290 aa).

The substrate site is built by asparagine 14 and asparagine 67. The Proton donor role is filled by cysteine 76. Residues 77–78 (GN), asparagine 166, asparagine 199, and 217–218 (ER) each bind substrate. The active-site Proton acceptor is cysteine 226. 227–228 (GT) provides a ligand contact to substrate.

Belongs to the diaminopimelate epimerase family. As to quaternary structure, homodimer.

It localises to the cytoplasm. It carries out the reaction (2S,6S)-2,6-diaminopimelate = meso-2,6-diaminopimelate. The protein operates within amino-acid biosynthesis; L-lysine biosynthesis via DAP pathway; DL-2,6-diaminopimelate from LL-2,6-diaminopimelate: step 1/1. Catalyzes the stereoinversion of LL-2,6-diaminopimelate (L,L-DAP) to meso-diaminopimelate (meso-DAP), a precursor of L-lysine and an essential component of the bacterial peptidoglycan. The polypeptide is Diaminopimelate epimerase (Geobacillus kaustophilus (strain HTA426)).